A 205-amino-acid chain; its full sequence is Guanylyl cyclase-activating protein 1 (205 aa).

The N-myristoyl glycine moiety is linked to residue glycine 2. A Deamidated asparagine modification is found at asparagine 3. 4 consecutive EF-hand domains span residues 14-49, 51-86, 87-122, and 131-166; these read SSTE…KNLS, WASQ…VLKG, KVEQ…IRAI, and TAEE…DQML. Residues aspartate 64, asparagine 66, aspartate 68, tyrosine 70, glutamate 75, aspartate 100, aspartate 102, asparagine 104, cysteine 106, glutamate 111, aspartate 144, asparagine 146, aspartate 148, glutamate 150, and glutamate 155 each coordinate Ca(2+). A disordered region spans residues 185-205; it reads NGEQDEEGASGRETEAAEADG.

In terms of assembly, homodimer. Detected in the retina. Detected in rod and cone photoreceptor cells (at protein level). Also present in certain pinealocytes.

It is found in the membrane. The protein resides in the photoreceptor inner segment. The protein localises to the cell projection. Its subcellular location is the cilium. It localises to the photoreceptor outer segment. In terms of biological role, stimulates retinal guanylyl cyclase when free calcium ions concentration is low and inhibits guanylyl cyclase when free calcium ions concentration is elevated. This Ca(2+)-sensitive regulation of retinal guanylyl cyclase is a key event in recovery of the dark state of rod photoreceptors following light exposure. May be involved in cone photoreceptor light response and recovery of response in bright light. The chain is Guanylyl cyclase-activating protein 1 (GUCA1A) from Bos taurus (Bovine).